The primary structure comprises 151 residues: Small ribosomal subunit protein uS15 (151 aa).

The protein belongs to the universal ribosomal protein uS15 family. In terms of assembly, component of the small ribosomal subunit. Part of the small subunit (SSU) processome, composed of more than 70 proteins and the RNA chaperone small nucleolar RNA (snoRNA) U3.

It is found in the cytoplasm. It localises to the nucleus. Its subcellular location is the nucleolus. In terms of biological role, component of the small ribosomal subunit. The ribosome is a large ribonucleoprotein complex responsible for the synthesis of proteins in the cell. Part of the small subunit (SSU) processome, first precursor of the small eukaryotic ribosomal subunit. During the assembly of the SSU processome in the nucleolus, many ribosome biogenesis factors, an RNA chaperone and ribosomal proteins associate with the nascent pre-rRNA and work in concert to generate RNA folding, modifications, rearrangements and cleavage as well as targeted degradation of pre-ribosomal RNA by the RNA exosome. This Caenorhabditis elegans protein is Small ribosomal subunit protein uS15 (rps-13).